Consider the following 219-residue polypeptide: Large ribosomal subunit protein uL3 (219 aa).

Residues 134-153 (RASHGNSRSHNVPGSIGMAQ) form a disordered region. At Gln-153 the chain carries N5-methylglutamine.

The protein belongs to the universal ribosomal protein uL3 family. In terms of assembly, part of the 50S ribosomal subunit. Forms a cluster with proteins L14 and L19. In terms of processing, methylated by PrmB.

In terms of biological role, one of the primary rRNA binding proteins, it binds directly near the 3'-end of the 23S rRNA, where it nucleates assembly of the 50S subunit. The protein is Large ribosomal subunit protein uL3 of Paraburkholderia phytofirmans (strain DSM 17436 / LMG 22146 / PsJN) (Burkholderia phytofirmans).